A 108-amino-acid polypeptide reads, in one-letter code: Small ribosomal subunit protein bS6 (108 aa).

It belongs to the bacterial ribosomal protein bS6 family.

Functionally, binds together with bS18 to 16S ribosomal RNA. This Nostoc sp. (strain PCC 7120 / SAG 25.82 / UTEX 2576) protein is Small ribosomal subunit protein bS6.